The following is a 399-amino-acid chain: Elongation factor Tu (399 aa).

In terms of domain architecture, tr-type G spans 10 to 204; it reads KPHVNIGTIG…AVDASIPEPE (195 aa). The tract at residues 19 to 26 is G1; it reads GHVDHGKT. Residue 19–26 participates in GTP binding; the sequence is GHVDHGKT. Thr-26 is a binding site for Mg(2+). The interval 60 to 64 is G2; sequence GITIN. Residues 81–84 form a G3 region; that stretch reads DCPG. GTP contacts are provided by residues 81-85 and 136-139; these read DCPGH and NKCD. The segment at 136–139 is G4; the sequence is NKCD. Residues 174 to 176 form a G5 region; sequence SGL.

Belongs to the TRAFAC class translation factor GTPase superfamily. Classic translation factor GTPase family. EF-Tu/EF-1A subfamily. Monomer.

Its subcellular location is the cytoplasm. The enzyme catalyses GTP + H2O = GDP + phosphate + H(+). GTP hydrolase that promotes the GTP-dependent binding of aminoacyl-tRNA to the A-site of ribosomes during protein biosynthesis. The polypeptide is Elongation factor Tu (Prochlorococcus marinus (strain MIT 9215)).